We begin with the raw amino-acid sequence, 264 residues long: NAD-capped RNA hydrolase NudC (264 aa).

Zn(2+) is bound by residues Cys-99 and Cys-102. Glu-112 is a binding site for substrate. 2 residues coordinate Zn(2+): Cys-117 and Cys-120. Residue Tyr-125 participates in substrate binding. Residues 126 to 253 (PVICPSIIVA…TIARKLIHVT (128 aa)) form the Nudix hydrolase domain. Residues Ala-162, Glu-178, and Glu-182 each contribute to the a divalent metal cation site. Positions 163–184 (GFVEVGETFEQAVQREVFEETG) match the Nudix box motif. 196–203 (QPWAFPNS) serves as a coordination point for substrate. Position 223 (Glu-223) interacts with a divalent metal cation. Substrate is bound at residue Ala-246.

It belongs to the Nudix hydrolase family. NudC subfamily. Homodimer. It depends on Mg(2+) as a cofactor. Mn(2+) serves as cofactor. The cofactor is Zn(2+).

The enzyme catalyses a 5'-end NAD(+)-phospho-ribonucleoside in mRNA + H2O = a 5'-end phospho-adenosine-phospho-ribonucleoside in mRNA + beta-nicotinamide D-ribonucleotide + 2 H(+). The catalysed reaction is NAD(+) + H2O = beta-nicotinamide D-ribonucleotide + AMP + 2 H(+). It catalyses the reaction NADH + H2O = reduced beta-nicotinamide D-ribonucleotide + AMP + 2 H(+). MRNA decapping enzyme that specifically removes the nicotinamide adenine dinucleotide (NAD) cap from a subset of mRNAs by hydrolyzing the diphosphate linkage to produce nicotinamide mononucleotide (NMN) and 5' monophosphate mRNA. The NAD-cap is present at the 5'-end of some mRNAs and stabilizes RNA against 5'-processing. Has preference for mRNAs with a 5'-end purine. Catalyzes the hydrolysis of a broad range of dinucleotide pyrophosphates. The chain is NAD-capped RNA hydrolase NudC from Haemophilus influenzae (strain ATCC 51907 / DSM 11121 / KW20 / Rd).